The primary structure comprises 126 residues: MPTLNQLVRQGRRRFEARSKSPALRGCPQLRGVCTKVYTTTPKKPNSALRKVAKVRLSNRLEVISYIGGEGHNLQEHSMVLVRGGRVKDLPGVRYHIVRGALDAGGVRERRRSRSKYGAKMPRSAA.

A 3-methylthioaspartic acid modification is found at D89. The disordered stretch occupies residues 106-126; sequence GVRERRRSRSKYGAKMPRSAA.

Belongs to the universal ribosomal protein uS12 family. In terms of assembly, part of the 30S ribosomal subunit. Contacts proteins S8 and S17. May interact with IF1 in the 30S initiation complex.

With S4 and S5 plays an important role in translational accuracy. Functionally, interacts with and stabilizes bases of the 16S rRNA that are involved in tRNA selection in the A site and with the mRNA backbone. Located at the interface of the 30S and 50S subunits, it traverses the body of the 30S subunit contacting proteins on the other side and probably holding the rRNA structure together. The combined cluster of proteins S8, S12 and S17 appears to hold together the shoulder and platform of the 30S subunit. This Tremblaya princeps protein is Small ribosomal subunit protein uS12.